Consider the following 957-residue polypeptide: Protein translocase subunit SecA (957 aa).

ATP contacts are provided by residues glutamine 86, 104 to 108, and aspartate 494; that span reads GEGKT. Residues 929-947 show a composition bias toward low complexity; the sequence is SRPAPAPTAAASPDPSSAS. The disordered stretch occupies residues 929 to 957; that stretch reads SRPAPAPTAAASPDPSSASGVVEADFTEE.

Belongs to the SecA family. As to quaternary structure, monomer and homodimer. Part of the essential Sec protein translocation apparatus which comprises SecA, SecYEG and auxiliary proteins SecDF. Other proteins may also be involved.

The protein resides in the cell inner membrane. It localises to the cellular thylakoid membrane. The protein localises to the cytoplasm. It carries out the reaction ATP + H2O + cellular proteinSide 1 = ADP + phosphate + cellular proteinSide 2.. Functionally, part of the Sec protein translocase complex. Interacts with the SecYEG preprotein conducting channel. Has a central role in coupling the hydrolysis of ATP to the transfer of proteins into and across the cell membrane, serving as an ATP-driven molecular motor driving the stepwise translocation of polypeptide chains across the membrane. Probably participates in protein translocation into and across both the cytoplasmic and thylakoid membranes in cyanobacterial cells. In Synechococcus sp. (strain JA-2-3B'a(2-13)) (Cyanobacteria bacterium Yellowstone B-Prime), this protein is Protein translocase subunit SecA.